The sequence spans 316 residues: tRNA dimethylallyltransferase (316 aa).

ATP is bound at residue 17–24 (GPTASGKT). Position 19-24 (19-24 (TASGKT)) interacts with substrate. Interaction with substrate tRNA stretches follow at residues 42 to 45 (DSVL), 166 to 170 (QRLSR), 247 to 252 (RCVGYR), and 280 to 287 (KRQITWLR).

Belongs to the IPP transferase family. In terms of assembly, monomer. Requires Mg(2+) as cofactor.

The catalysed reaction is adenosine(37) in tRNA + dimethylallyl diphosphate = N(6)-dimethylallyladenosine(37) in tRNA + diphosphate. Catalyzes the transfer of a dimethylallyl group onto the adenine at position 37 in tRNAs that read codons beginning with uridine, leading to the formation of N6-(dimethylallyl)adenosine (i(6)A). This Shigella flexneri protein is tRNA dimethylallyltransferase.